Consider the following 234-residue polypeptide: ATP-dependent dethiobiotin synthetase BioD (234 aa).

14 to 19 is an ATP binding site; sequence GVGKTI. Thr18 serves as a coordination point for Mg(2+). Lys39 is an active-site residue. Ser43 serves as a coordination point for substrate. ATP-binding positions include Asp56, 118-121, 178-179, and 208-210; these read EGAG, NH, and PWL. Asp56 and Glu118 together coordinate Mg(2+).

Belongs to the dethiobiotin synthetase family. In terms of assembly, homodimer. Mg(2+) is required as a cofactor.

The protein resides in the cytoplasm. The enzyme catalyses (7R,8S)-7,8-diammoniononanoate + CO2 + ATP = (4R,5S)-dethiobiotin + ADP + phosphate + 3 H(+). The protein operates within cofactor biosynthesis; biotin biosynthesis; biotin from 7,8-diaminononanoate: step 1/2. Functionally, catalyzes a mechanistically unusual reaction, the ATP-dependent insertion of CO2 between the N7 and N8 nitrogen atoms of 7,8-diaminopelargonic acid (DAPA, also called 7,8-diammoniononanoate) to form a ureido ring. In Marinobacter nauticus (strain ATCC 700491 / DSM 11845 / VT8) (Marinobacter aquaeolei), this protein is ATP-dependent dethiobiotin synthetase BioD.